Reading from the N-terminus, the 56-residue chain is Ovomucoid (56 aa).

Residues 6-56 enclose the Kazal-like domain; the sequence is VDCSEYPKPACTLEYRPLCGSDNKTYANKCNFCNAVVESNGTLTLSHFGKC. Intrachain disulfides connect Cys8/Cys38, Cys16/Cys35, and Cys24/Cys56. N-linked (GlcNAc...) asparagine glycosylation occurs at Asn45.

The protein localises to the secreted. This Callipepla californica (California quail) protein is Ovomucoid.